The primary structure comprises 1264 residues: P-type sodium-transporting ATPase4 (1264 aa).

Over residues Met1–Gln12 the composition is skewed to polar residues. Residues Met1–Asn102 form a disordered region. Composition is skewed to basic and acidic residues over residues Asn15 to Asn42 and Asn50 to Glu64. The next 8 membrane-spanning stretches (helical) occupy residues Val165–Ala185, Val186–Leu206, Gly359–Ile379, Phe393–Met413, Phe923–Val943, Ile1006–Phe1026, Cys1203–Leu1223, and Thr1226–Leu1246.

This sequence belongs to the cation transport ATPase (P-type) (TC 3.A.3) family.

It localises to the cell membrane. It catalyses the reaction Na(+)(in) + ATP + H2O = Na(+)(out) + ADP + phosphate + H(+). Its activity is regulated as follows. Inhibited by cipargamin and other spiroindolone compounds. Inhibited by 4-cyano-3-methylisoquinoline derivatives MB14 and MB10 but not RK18. Inhibited by (+)-SJ733, a dihydroisoquinolone compound. Its function is as follows. Sodium-exporting ATPase. Required for the extrusion of Na(+) from the intraerythrocytic parasites to maintain a low cytosolic concentration of Na(+). This is P-type sodium-transporting ATPase4 from Plasmodium falciparum (isolate 3D7).